The following is a 376-amino-acid chain: Fibromodulin (376 aa).

An N-terminal signal peptide occupies residues 1-18; sequence MQWASILLLAGLCSLSWA. Gln19 carries the pyrrolidone carboxylic acid modification. Sulfotyrosine occurs at positions 20, 38, 45, 47, 50, 53, 55, 63, and 65. Residues 67–105 form the LRRNT domain; that stretch reads SPPQPEPRDCPQECDCPPNFPTAMYCDNRNLKYLPFVPS. LRR repeat units lie at residues 106–127, 130–151, 156–176, 177–198, 201–222, 224–245, 246–266, and 269–289; these read RMKYVYFQNNQISSIQEGVFDN, GLLWIALHGNQITSDKVGKKVF, HLERLYLDHNNLTRIPSPLPR, SLRELHLDHNQISRVPNNALEG, NLTALYLHHNEIQEVGSSMKGL, SLILLDLSYNHLRKVPDGLPSA, LEQLYLEHNNVFSVPDSYFRG, and KLLYVRLSHNSLTNNGLASNT. A glycan (N-linked (GlcNAc...) (keratan sulfate) asparagine) is linked at Asn127. Asn166 is a glycosylation site (N-linked (GlcNAc...) (keratan sulfate) asparagine). N-linked (GlcNAc...) (keratan sulfate) asparagine glycosylation is present at Asn201. An N-linked (GlcNAc...) (keratan sulfate) asparagine glycan is attached at Asn291. 2 LRR repeats span residues 294 to 315 and 316 to 335; these read SLLELDLSYNQLQKIPPVSTNL and ENLYLQGNRINEFSISSFCT. A disulfide bridge connects residues Cys334 and Cys367. Asn341 carries N-linked (GlcNAc...) asparagine glycosylation. The LRR 11 repeat unit spans residues 344 to 365; the sequence is KLQVLRLDGNEIKRSAMPADAP.

The protein belongs to the small leucine-rich proteoglycan (SLRP) family. SLRP class II subfamily. Binds to type I and type II collagen. Post-translationally, binds keratan sulfate chains.

Its subcellular location is the secreted. It is found in the extracellular space. The protein localises to the extracellular matrix. Its function is as follows. Affects the rate of fibrils formation. May have a primary role in collagen fibrillogenesis. This is Fibromodulin (FMOD) from Bos taurus (Bovine).